A 435-amino-acid chain; its full sequence is Xylose isomerase (435 aa).

Residues D306 and D308 each contribute to the Mg(2+) site.

It belongs to the xylose isomerase family. In terms of assembly, homotetramer. The cofactor is Mg(2+).

It is found in the cytoplasm. It carries out the reaction alpha-D-xylose = alpha-D-xylulofuranose. In Allorhizobium ampelinum (strain ATCC BAA-846 / DSM 112012 / S4) (Agrobacterium vitis (strain S4)), this protein is Xylose isomerase.